A 290-amino-acid chain; its full sequence is Short neuropeptide F (290 aa).

An N-terminal signal peptide occupies residues 1–32 (MFRFNPQLSHGCALALICCLLNLLMMHQPTNA). A propeptide spanning residues 33 to 87 (ELSPVVQGEFFLPILPDDHPPNTDTSFGGPISNLYDNLLQREYAGPVVFPNHQVE) is cleaved from the precursor. A phenylalanine amide mark is found at F100 and F134. A propeptide spanning residues 138 to 290 (DPTLPQMRRT…IETSSIAPKN (153 aa)) is cleaved from the precursor. The tract at residues 238 to 290 (VAGYANDGDDTEAQLDEDTSEFQREARKPMRLRWGRSTGKAPQIETSSIAPKN) is disordered. Residues 244–257 (DGDDTEAQLDEDTS) are compositionally biased toward acidic residues. Positions 281–290 (IETSSIAPKN) are enriched in polar residues.

It belongs to the NPY family.

Its subcellular location is the secreted. Functionally, plays a role in controlling food intake and regulating body size. This chain is Short neuropeptide F, found in Drosophila pseudoobscura pseudoobscura (Fruit fly).